The following is a 122-amino-acid chain: Ribosomal protein eL22-like (122 aa).

Residues Ser-112, Ser-118, and Ser-120 each carry the phosphoserine modification.

This sequence belongs to the eukaryotic ribosomal protein eL22 family.

The chain is Ribosomal protein eL22-like (RPL22L1) from Homo sapiens (Human).